The following is a 406-amino-acid chain: Nuclear hormone receptor family member nhr-133 (406 aa).

Positions 8-83 (SGPCEICEQP…VGMNSSKFQN (76 aa)) form a DNA-binding region, nuclear receptor. An NR C4-type zinc finger spans residues 11-31 (CEICEQPAHGNHFGVLSCRAC). The NR C4-type; degenerate zinc finger occupies 47–66 (DRVCRKGNCIGNDLYRCKIC). The 257-residue stretch at 150–406 (YSWSPNHYPN…YSHPEMFEFS (257 aa)) folds into the NR LBD domain.

It belongs to the nuclear hormone receptor family.

The protein localises to the nucleus. In terms of biological role, orphan nuclear receptor. The protein is Nuclear hormone receptor family member nhr-133 of Caenorhabditis elegans.